A 365-amino-acid chain; its full sequence is Peptide chain release factor 2 (365 aa).

Glutamine 252 carries the N5-methylglutamine modification.

It belongs to the prokaryotic/mitochondrial release factor family. In terms of processing, methylated by PrmC. Methylation increases the termination efficiency of RF2.

Its subcellular location is the cytoplasm. Functionally, peptide chain release factor 2 directs the termination of translation in response to the peptide chain termination codons UGA and UAA. The polypeptide is Peptide chain release factor 2 (Shigella flexneri).